The primary structure comprises 72 residues: Exodeoxyribonuclease 7 small subunit (72 aa).

This sequence belongs to the XseB family. As to quaternary structure, heterooligomer composed of large and small subunits.

It is found in the cytoplasm. The enzyme catalyses Exonucleolytic cleavage in either 5'- to 3'- or 3'- to 5'-direction to yield nucleoside 5'-phosphates.. Functionally, bidirectionally degrades single-stranded DNA into large acid-insoluble oligonucleotides, which are then degraded further into small acid-soluble oligonucleotides. The protein is Exodeoxyribonuclease 7 small subunit of Ruegeria pomeroyi (strain ATCC 700808 / DSM 15171 / DSS-3) (Silicibacter pomeroyi).